Consider the following 942-residue polypeptide: Isoleucine--tRNA ligase (942 aa).

A 'HIGH' region motif is present at residues 58–68; that stretch reads PYVNGSIHLGH. Residue Glu-564 participates in L-isoleucyl-5'-AMP binding. The 'KMSKS' region motif lies at 605 to 609; it reads KMSKS. Lys-608 contacts ATP. Zn(2+) is bound by residues Cys-905, Cys-908, Cys-925, and Cys-928.

This sequence belongs to the class-I aminoacyl-tRNA synthetase family. IleS type 1 subfamily. Monomer. Requires Zn(2+) as cofactor.

The protein localises to the cytoplasm. It catalyses the reaction tRNA(Ile) + L-isoleucine + ATP = L-isoleucyl-tRNA(Ile) + AMP + diphosphate. Its function is as follows. Catalyzes the attachment of isoleucine to tRNA(Ile). As IleRS can inadvertently accommodate and process structurally similar amino acids such as valine, to avoid such errors it has two additional distinct tRNA(Ile)-dependent editing activities. One activity is designated as 'pretransfer' editing and involves the hydrolysis of activated Val-AMP. The other activity is designated 'posttransfer' editing and involves deacylation of mischarged Val-tRNA(Ile). This Blochmanniella pennsylvanica (strain BPEN) protein is Isoleucine--tRNA ligase.